Reading from the N-terminus, the 168-residue chain is Probable acetolactate synthase small subunit (168 aa).

The region spanning 10–84 is the ACT domain; that stretch reads IISALVEHKP…DVIKVRDLEP (75 aa).

Belongs to the acetolactate synthase small subunit family. As to quaternary structure, dimer of large and small chains.

The catalysed reaction is 2 pyruvate + H(+) = (2S)-2-acetolactate + CO2. It functions in the pathway amino-acid biosynthesis; L-isoleucine biosynthesis; L-isoleucine from 2-oxobutanoate: step 1/4. The protein operates within amino-acid biosynthesis; L-valine biosynthesis; L-valine from pyruvate: step 1/4. In Methanothermobacter thermautotrophicus (strain ATCC 29096 / DSM 1053 / JCM 10044 / NBRC 100330 / Delta H) (Methanobacterium thermoautotrophicum), this protein is Probable acetolactate synthase small subunit (ilvH).